We begin with the raw amino-acid sequence, 852 residues long: Cytochrome P450 monooxygenase mpaDE (852 aa).

The Lumenal portion of the chain corresponds to 1-6 (MDYLII). The chain crosses the membrane as a helical span at residues 7–29 (IRITAVAVVLYLTRYVCCLYLHL). The Cytoplasmic portion of the chain corresponds to 30–852 (QDVPGPLFAK…DLEDAMEGTK (823 aa)). Cys-448 serves as a coordination point for heme.

It belongs to the cytochrome P450 family. It depends on heme as a cofactor.

Its subcellular location is the endoplasmic reticulum membrane. The catalysed reaction is 5-methylorsellinate + reduced [NADPH--hemoprotein reductase] + O2 = 4,6-dihydroxy-2-(hydroxymethyl)-3-methylbenzoate + oxidized [NADPH--hemoprotein reductase] + H2O + H(+). It catalyses the reaction 4,6-dihydroxy-2-(hydroxymethyl)-3-methylbenzoate + H(+) = 5,7-dihydroxy-4-methylphthalide + H2O. It participates in secondary metabolite biosynthesis; terpenoid biosynthesis. Cytochrome P450 monooxygenase; part of the gene cluster that mediates the biosynthesis of mycophenolic acid (MPA), the first isolated antibiotic natural product in the world obtained from a culture of Penicillium brevicompactum in 1893. MpaDE is an endoplasmic reticulum-bound enzyme that catalyzes the conversion of 5-methylorsellinic acid (5MOA) into the phthalide compound 5,7-dihydroxy-4,6-dimethylphthalide (DHMP). MpaDE first catalyzes hydroxylation of 5-MOA to 4,6-dihydroxy-2-(hydroxymethyl)-3-methylbenzoic acid (DHMB), and then acts as a lactone synthase that catalyzes the ring closure to convert DHMB into DHMP. The first step of the pathway is the synthesis of 5-methylorsellinic acid (5MOA) by the cytosolic polyketide synthase mpaC. 5MOA is then converted to the phthalide compound 5,7-dihydroxy-4,6-dimethylphthalide (DHMP) by the endoplasmic reticulum-bound cytochrome P450 monooxygenase mpaDE. MpaDE first catalyzes hydroxylation of 5-MOA to 4,6-dihydroxy-2-(hydroxymethyl)-3-methylbenzoic acid (DHMB). MpaDE then acts as a lactone synthase that catalyzes the ring closure to convert DHMB into DHMP. The next step is the prenylation of DHMP by the Golgi apparatus-associated prenyltransferase mpaA to yield farnesyl-DHMP (FDHMP). The ER-bound oxygenase mpaB then mediates the oxidative cleavage the C19-C20 double bond in FDHMP to yield FDHMP-3C via a mycophenolic aldehyde intermediate. The O-methyltransferase mpaG catalyzes the methylation of FDHMP-3C to yield MFDHMP-3C. After the cytosolic methylation of FDHMP-3C, MFDHMP-3C enters into peroxisomes probably via free diffusion due to its low molecular weight. Upon a peroxisomal CoA ligation reaction, catalyzed by a beta-oxidation component enzyme acyl-CoA ligase ACL891, MFDHMP-3C-CoA would then be restricted to peroxisomes for the following beta-oxidation pathway steps. The peroxisomal beta-oxidation machinery than converts MFDHMP-3C-CoA into MPA_CoA, via a beta-oxidation chain-shortening process. Finally mpaH acts as a peroxisomal acyl-CoA hydrolase with high substrate specificity toward MPA-CoA to release the final product MPA. The chain is Cytochrome P450 monooxygenase mpaDE from Penicillium roqueforti (strain FM164).